Here is a 551-residue protein sequence, read N- to C-terminus: Transcription factor 7-like 1-B (551 aa).

The segment covering 1–11 (MPQLNGGGGDE) has biased composition (gly residues). 3 disordered regions span residues 1-76 (MPQL…DLES), 298-326 (QEPN…KPHI), and 392-525 (GWSA…PPSP). Residues 19–32 (ISFKDEGEQEDKIS) show a composition bias toward basic and acidic residues. The segment covering 46–61 (SSLVSESENNSSSSDS) has biased composition (low complexity). Basic and acidic residues predominate over residues 63–76 (QTERRPQPRADLES). Positions 326 to 394 (IKKPLNAFML…LHSQLYPGWS (69 aa)) form a DNA-binding region, HMG box. The segment covering 449-468 (SPATPSAALASPAAPAATHS) has biased composition (low complexity). Residues 469 to 478 (EQAQPLSLTT) are compositionally biased toward polar residues. The span at 493-505 (SSSSSSSSSSSGL) shows a compositional bias: low complexity.

This sequence belongs to the TCF/LEF family. In terms of assembly, interacts with ctnnb1.

The protein localises to the nucleus. Participates in the Wnt signaling pathway. Probably binds to DNA and acts as a repressor in the absence of ctnnb1, and possibly as an activator in its presence. Regulates anterior-posterior patterning in the neuroectoderm by repressing posterior neural fates. Also required for hindbrain morphogenesis. The sequence is that of Transcription factor 7-like 1-B (tcf7l1b) from Danio rerio (Zebrafish).